The following is a 280-amino-acid chain: Ribosomal RNA small subunit methyltransferase A (280 aa).

Positions 28, 30, 55, 77, 103, and 122 each coordinate S-adenosyl-L-methionine.

This sequence belongs to the class I-like SAM-binding methyltransferase superfamily. rRNA adenine N(6)-methyltransferase family. RsmA subfamily.

The protein resides in the cytoplasm. It carries out the reaction adenosine(1518)/adenosine(1519) in 16S rRNA + 4 S-adenosyl-L-methionine = N(6)-dimethyladenosine(1518)/N(6)-dimethyladenosine(1519) in 16S rRNA + 4 S-adenosyl-L-homocysteine + 4 H(+). Specifically dimethylates two adjacent adenosines (A1518 and A1519) in the loop of a conserved hairpin near the 3'-end of 16S rRNA in the 30S particle. May play a critical role in biogenesis of 30S subunits. This chain is Ribosomal RNA small subunit methyltransferase A, found in Ruegeria sp. (strain TM1040) (Silicibacter sp.).